Here is a 637-residue protein sequence, read N- to C-terminus: tRNA uridine 5-carboxymethylaminomethyl modification enzyme MnmG (637 aa).

14-19 (GAGHAG) contacts FAD. 279–293 (GPRYCPSIEDKVVRF) provides a ligand contact to NAD(+).

Belongs to the MnmG family. Homodimer. Heterotetramer of two MnmE and two MnmG subunits. It depends on FAD as a cofactor.

It is found in the cytoplasm. Its function is as follows. NAD-binding protein involved in the addition of a carboxymethylaminomethyl (cmnm) group at the wobble position (U34) of certain tRNAs, forming tRNA-cmnm(5)s(2)U34. This chain is tRNA uridine 5-carboxymethylaminomethyl modification enzyme MnmG, found in Desulfitobacterium hafniense (strain Y51).